The primary structure comprises 187 residues: PRA1 family protein G1 (187 aa).

The next 3 helical transmembrane spans lie at 84 to 104 (LFLIGDPMALVTVASFVAMWL), 125 to 145 (VIVFGLILGSLWALWFINSLQ), and 146 to 166 (CLILGVVTSVLLCLVHAIIRN).

Belongs to the PRA1 family. In terms of tissue distribution, expressed in roots and lateral roots.

It localises to the endosome membrane. Its function is as follows. May be involved in both secretory and endocytic intracellular trafficking in the endosomal/prevacuolar compartments. In Arabidopsis thaliana (Mouse-ear cress), this protein is PRA1 family protein G1 (PRA1G1).